The following is a 353-amino-acid chain: Stomatin-like protein 2, mitochondrial (353 aa).

A mitochondrion-targeting transit peptide spans 1–28 (MLARAARGTGALLLRGSVQASGRVPRRA). At Ser-17 the chain carries Phosphoserine; by PKC/PRKCZ. Tyr-124 bears the Phosphotyrosine mark. Lys-145 bears the N6-acetyllysine; alternate mark. Position 145 is an N6-succinyllysine; alternate (Lys-145). The stretch at 215 to 252 (INVAEGKKQAQILASEAEKAEQINQAAGEASAVLAKAK) forms a coiled coil. Lys-233 carries the post-translational modification N6-acetyllysine. The segment at 324–353 (VPGAQNSSQSRRDVQATDTSIEELGRVKLS) is disordered. Position 330 is a phosphoserine (Ser-330).

The protein belongs to the band 7/mec-2 family. Forms homooligomers. Interacts with MFN2; may form heterooligomers. Interacts with PHB1 and PHB2; recruits them to cardiolipin-enriched mitochondrial membranes and stabilizes them. Interacts with CACNA2D2.

Its subcellular location is the cell membrane. It is found in the mitochondrion. The protein resides in the mitochondrion inner membrane. It localises to the mitochondrion intermembrane space. The protein localises to the membrane raft. Its subcellular location is the cytoplasm. It is found in the cytoskeleton. Its function is as follows. Mitochondrial protein that probably regulates the biogenesis and the activity of mitochondria. Stimulates cardiolipin biosynthesis, binds cardiolipin-enriched membranes where it recruits and stabilizes some proteins including prohibitin and may therefore act in the organization of functional microdomains in mitochondrial membranes. Through regulation of the mitochondrial function may play a role into several biological processes including cell migration, cell proliferation, T-cell activation, calcium homeostasis and cellular response to stress. May play a role in calcium homeostasis through negative regulation of calcium efflux from mitochondria. Required for mitochondrial hyperfusion a pro-survival cellular response to stress which results in increased ATP production by mitochondria. May also regulate the organization of functional domains at the plasma membrane and play a role in T-cell activation through association with the T-cell receptor signaling complex and its regulation. The sequence is that of Stomatin-like protein 2, mitochondrial (Stoml2) from Mus musculus (Mouse).